Here is an 809-residue protein sequence, read N- to C-terminus: Ferric-pyoverdine BN7/BN8 receptor (809 aa).

The N-terminal stretch at 1–45 (MNHTARKRQGWQRSVSQKLAGAVVQGIACMGASAPLLLMPAWATA) is a signal peptide. In terms of domain architecture, TBDR plug spans 166-273 (TPRETPQSLT…PSATINLIRK (108 aa)). The TBDR beta-barrel domain occupies 278 to 809 (EAQASITGEA…NVMTSFKYSF (532 aa)). The TonB C-terminal box motif lies at 792–809 (YGVYGTPRNVMTSFKYSF).

This sequence belongs to the TonB-dependent receptor family.

Its subcellular location is the cell outer membrane. In terms of biological role, specific receptor for the siderophores ferric pyoverdines (pseudobactins) BN8 and BN7, iron chelating molecules that allow the organism to extract iron from the environment, especially under iron-restricted conditions. In Pseudomonas putida (Arthrobacter siderocapsulatus), this protein is Ferric-pyoverdine BN7/BN8 receptor (pupB).